We begin with the raw amino-acid sequence, 477 residues long: Probable F-box protein At5g25300 (477 aa).

The stretch at 346–377 (VDMNKEDSQIEINEKETKINQEHDQSDETQAK) forms a coiled coil. Residues 412 to 458 (SPPWSELPGDILRSVFERLSFVDFQRAKQTCPIKRSKSNCLRLWLIT) form the F-box domain.

The protein is Probable F-box protein At5g25300 of Arabidopsis thaliana (Mouse-ear cress).